Consider the following 338-residue polypeptide: Tetraacyldisaccharide 4'-kinase (338 aa).

51 to 58 (HVGGAGKT) serves as a coordination point for ATP.

Belongs to the LpxK family.

It catalyses the reaction a lipid A disaccharide + ATP = a lipid IVA + ADP + H(+). It participates in glycolipid biosynthesis; lipid IV(A) biosynthesis; lipid IV(A) from (3R)-3-hydroxytetradecanoyl-[acyl-carrier-protein] and UDP-N-acetyl-alpha-D-glucosamine: step 6/6. Transfers the gamma-phosphate of ATP to the 4'-position of a tetraacyldisaccharide 1-phosphate intermediate (termed DS-1-P) to form tetraacyldisaccharide 1,4'-bis-phosphate (lipid IVA). The protein is Tetraacyldisaccharide 4'-kinase of Bradyrhizobium diazoefficiens (strain JCM 10833 / BCRC 13528 / IAM 13628 / NBRC 14792 / USDA 110).